A 406-amino-acid polypeptide reads, in one-letter code: GTPase Obg (406 aa).

One can recognise an Obg domain in the interval 1–159 (MKFVDEVSIF…RDLKLELKVL (159 aa)). The tract at residues 126–149 (GNTRFKSSTNRAPRQTTPGKPGES) is disordered. The span at 129–143 (RFKSSTNRAPRQTTP) shows a compositional bias: polar residues. Positions 160 to 333 (ADVGLLGLPN…ICRDIMHYLE (174 aa)) constitute an OBG-type G domain. Residues 166 to 173 (GLPNAGKS), 191 to 195 (FTTLV), 213 to 216 (DIPG), 283 to 286 (NKMD), and 314 to 316 (SAI) each bind GTP. Positions 173 and 193 each coordinate Mg(2+). The disordered stretch occupies residues 376 to 406 (SGVRSVDDIDEDDDFFDDEDDDGPEIIYVRD). The span at 383 to 399 (DIDEDDDFFDDEDDDGP) shows a compositional bias: acidic residues.

This sequence belongs to the TRAFAC class OBG-HflX-like GTPase superfamily. OBG GTPase family. As to quaternary structure, monomer. Requires Mg(2+) as cofactor.

The protein localises to the cytoplasm. Its function is as follows. An essential GTPase which binds GTP, GDP and possibly (p)ppGpp with moderate affinity, with high nucleotide exchange rates and a fairly low GTP hydrolysis rate. Plays a role in control of the cell cycle, stress response, ribosome biogenesis and in those bacteria that undergo differentiation, in morphogenesis control. In Ectopseudomonas mendocina (strain ymp) (Pseudomonas mendocina), this protein is GTPase Obg.